The chain runs to 231 residues: NADH-ubiquinone oxidoreductase chain 4 (231 aa).

Transmembrane regions (helical) follow at residues 1-21 (PIAG…YGII), 34-54 (MFLP…LTCL), 61-80 (SLIA…AIII), 84-106 (WGLT…LFCL), 128-148 (ILPM…ATPP), and 169-189 (TIIL…HMFL).

This sequence belongs to the complex I subunit 4 family.

It is found in the mitochondrion membrane. The catalysed reaction is a ubiquinone + NADH + 5 H(+)(in) = a ubiquinol + NAD(+) + 4 H(+)(out). Core subunit of the mitochondrial membrane respiratory chain NADH dehydrogenase (Complex I) that is believed to belong to the minimal assembly required for catalysis. Complex I functions in the transfer of electrons from NADH to the respiratory chain. The immediate electron acceptor for the enzyme is believed to be ubiquinone. This Atropoides picadoi (Picado's pit viper) protein is NADH-ubiquinone oxidoreductase chain 4 (MT-ND4).